A 270-amino-acid chain; its full sequence is Palmitoyltransferase ZDHHC12-A (270 aa).

The Cytoplasmic segment spans residues 1 to 8 (MNKSLFKS). The helical transmembrane segment at 9 to 29 (GCLVRTAHVILTWIITLILFL) threads the bilayer. Topologically, residues 30–45 (HNTDLRRCQERGDLLQ) are lumenal. A helical transmembrane segment spans residues 46 to 66 (PLVFSSVLLLSVLLYFTVSLM). Residues 67-145 (DPGFVLSDSQ…DNCVGELNHR (79 aa)) are Cytoplasmic-facing. The 51-residue stretch at 102–152 (RRCGYCFLLQPMRARHCKWCKRCVRRFDHHCPWIDNCVGELNHRWFLLYLC) folds into the DHHC domain. The active-site S-palmitoyl cysteine intermediate is the cysteine 132. A helical transmembrane segment spans residues 146–166 (WFLLYLCVQFTAVCWGLQSAW). Residues 167–182 (SGFISAPSWQQWFTQN) lie on the Lumenal side of the membrane. Residues 183–203 (VFLLVAFAVTAVFSVVLLLLL) form a helical membrane-spanning segment. The Cytoplasmic segment spans residues 204–270 (CIHAYLASVN…MYIRHNNASV (67 aa)).

Belongs to the DHHC palmitoyltransferase family.

Its subcellular location is the golgi apparatus membrane. It localises to the endoplasmic reticulum membrane. The catalysed reaction is L-cysteinyl-[protein] + hexadecanoyl-CoA = S-hexadecanoyl-L-cysteinyl-[protein] + CoA. Functionally, palmitoyltransferase that catalyzes the addition of palmitate onto various protein substrates. Has a palmitoyltransferase activity toward gephyrin/GPHN, regulating its clustering at synapses and its function in gamma-aminobutyric acid receptor clustering. Acts as an inhibitor of the NLRP3 inflammasome by mediating palmitoylation of NLRP3, thereby promoting NLRP3 degradation by the chaperone-mediated autophagy (CMA) process. This is Palmitoyltransferase ZDHHC12-A from Danio rerio (Zebrafish).